A 72-amino-acid chain; its full sequence is Protein RALF-like 20 (72 aa).

The first 27 residues, 1 to 27 (MVLSKKTIMQSFALMIILSIVMSTTEA), serve as a signal peptide directing secretion. Cystine bridges form between Cys-43–Cys-51 and Cys-63–Cys-69.

The protein belongs to the plant rapid alkalinization factor (RALF) family.

Its subcellular location is the secreted. In terms of biological role, cell signaling peptide that may regulate plant stress, growth, and development. Mediates a rapid alkalinization of extracellular space by mediating a transient increase in the cytoplasmic Ca(2+) concentration leading to a calcium-dependent signaling events through a cell surface receptor and a concomitant activation of some intracellular mitogen-activated protein kinases. The polypeptide is Protein RALF-like 20 (RALFL20) (Arabidopsis thaliana (Mouse-ear cress)).